Reading from the N-terminus, the 1208-residue chain is MEPLLLGRGLIVYLMFLLLKFSKAIEIPSSVQQVPTIIKQSKVQVAFPFDEYFQIECEAKGNPEPTFSWTKDGNPFYFTDHRIIPSNNSGTFRIPNEGHISHFQGKYRCFASNKLGIAMSEEIEFIVPSVPKFPKEKIDPLEVEEGDPIVLPCNPPKGLPPLHIYWMNIELEHIEQDERVYMSQKGDLYFANVEEKDSRNDYCCFAAFPRLRTIVQKMPMKLTVNSSNSIKQRKPKLLLPPTESGSESSITILKGEILLLECFAEGLPTPQVDWNKIGGDLPKGRETKENYGKTLKIENVSYQDKGNYRCTASNFLGTATHDFHVIVEEPPRWTKKPQSAVYSTGSNGILLCEAEGEPQPTIKWRVNGSPVDNHPFAGDVVFPREISFTNLQPNHTAVYQCEASNVHGTILANANIDVVDVRPLIQTKDGENYATVVGYSAFLHCEFFASPEAVVSWQKVEEVKPLEGRRYHIYENGTLQINRTTEEDAGSYSCWVENAIGKTAVTANLDIRNATKLRVSPKNPRIPKLHMLELHCESKCDSHLKHSLKLSWSKDGEAFEINGTEDGRIIIDGANLTISNVTLEDQGIYCCSAHTALDSAADITQVTVLDVPDPPENLHLSERQNRSVRLTWEAGADHNSNISEYIVEFEGNKEEPGRWEELTRVQGKKTTVILPLAPFVRYQFRVIAVNEVGRSQPSQPSDHHETPPAAPDRNPQNIRVQASQPKEMIIKWEPLKSMEQNGPGLEYRVTWKPQGAPVEWEEETVTNHTLRVMTPAVYAPYDVKVQAINQLGSGPDPQSVTLYSGEDYPDTAPVIHGVDVINSTLVKVTWSTVPKDRVHGRLKGYQINWWKTKSLLDGRTHPKEVNILRFSGQRNSGMVPSLDAFSEFHLTVLAYNSKGAGPESEPYIFQTPEGVPEQPTFLKVIKVDKDTATLSWGLPKKLNGNLTGYLLQYQIINDTYEIGELNDINITTPSKPSWHLSNLNATTKYKFYLRACTSQGCGKPITEESSTLGEGSKGIGKISGVNLTQKTHPIEVFEPGAEHIVRLMTKNWGDNDSIFQDVIETRGREYAGLYDDISTQGWFIGLMCAIALLTLLLLTVCFVKRNRGGKYSVKEKEDLHPDPEIQSVKDETFGEYSDSDEKPLKGSLRSLNRDMQPTESADSLVEYGEGDHGLFSEDGSFIGAYAGSKEKGSVESNGSSTATFPLRA.

Residues 1–24 (MEPLLLGRGLIVYLMFLLLKFSKA) form the signal peptide. Residues 25 to 1082 (IEIPSSVQQV…LYDDISTQGW (1058 aa)) are Extracellular-facing. Ig-like C2-type domains lie at 35 to 124 (PTII…EEIE) and 128 to 223 (PSVP…MKLT). 2 disulfides stabilise this stretch: C57/C109 and C153/C204. N-linked (GlcNAc...) asparagine glycosylation is found at K231 and N299. Ig-like C2-type domains follow at residues 235–328 (PKLL…VIVE), 331–417 (PRWT…ANID), 423–510 (PLIQ…ANLD), and 515–607 (TKLR…TQVT). Cystine bridges form between C262–C310, C352–C401, C445–C494, and C536–C591. N476 and N482 each carry an N-linked (GlcNAc...) asparagine glycan. The DGEA signature appears at 555–558 (DGEA). 2 N-linked (GlcNAc...) asparagine glycosylation sites follow: N562 and N580. Fibronectin type-III domains are found at residues 614–709 (PPEN…TPPA), 714–807 (NPQN…SGED), 809–914 (PDTA…TPEG), and 918–1015 (QPTF…LGEG). The interval 693–716 (GRSQPSQPSDHHETPPAAPDRNPQ) is disordered. Residues N767, N822, N945, and N1026 are each glycosylated (N-linked (GlcNAc...) asparagine). Residues 1083 to 1103 (FIGLMCAIALLTLLLLTVCFV) traverse the membrane as a helical segment. The Cytoplasmic portion of the chain corresponds to 1104–1208 (KRNRGGKYSV…SSTATFPLRA (105 aa)). Positions 1131–1163 (ETFGEYSDSDEKPLKGSLRSLNRDMQPTESADS) are disordered. Phosphoserine is present on residues S1147, S1160, and S1180. Residues 1149–1161 (RSLNRDMQPTESA) are compositionally biased toward polar residues. The FIG[AQ]Y signature appears at 1181–1185 (FIGAY). The tract at residues 1189 to 1208 (KEKGSVESNGSSTATFPLRA) is disordered. Over residues 1194-1208 (VESNGSSTATFPLRA) the composition is skewed to polar residues.

It belongs to the immunoglobulin superfamily. L1/neurofascin/NgCAM family. In terms of assembly, may interact with L1CAM. May interact with ITGB1/ITGA1 heterodimer and ITGB1/ITGA2 heterodimer as well as with ANK3. Post-translationally, cleavage by metalloprotease ADAM8 in the extracellular part generates 2 soluble forms (125 kDa and 165 kDa) in vitro and is inhibited by metalloprotease inhibitors. Cleaved by BACE1. In terms of processing, N-glycosylated. Contains N-linked oligosaccharides with a sulfated carbohydrate structure type HNK-1 (SO4-3-GlcUABeta1,3GalBeta1,4GlcNAc). O-glycosylated. In terms of tissue distribution, expressed in the fetal and adult brain as well as in Schwann cell culture. Also detected in adult peripheral tissues.

Its subcellular location is the cell membrane. The protein resides in the secreted. The protein localises to the extracellular space. It localises to the extracellular matrix. In terms of biological role, extracellular matrix and cell adhesion protein that plays a role in nervous system development and in synaptic plasticity. Both soluble and membranous forms promote neurite outgrowth of cerebellar and hippocampal neurons and suppress neuronal cell death. Plays a role in neuronal positioning of pyramidal neurons and in regulation of both the number of interneurons and the efficacy of GABAergic synapses. May play a role in regulating cell migration in nerve regeneration and cortical development. Potentiates integrin-dependent cell migration towards extracellular matrix proteins. Recruits ANK3 to the plasma membrane. This chain is Neural cell adhesion molecule L1-like protein (CHL1), found in Homo sapiens (Human).